A 183-amino-acid chain; its full sequence is Ubiquitin-conjugating enzyme E2 H (183 aa).

The region spanning 1 to 150 (MSSPSPGKRR…IKEYIQKYAT (150 aa)) is the UBC core domain. Lysine 60 bears the N6-acetyllysine mark. The active-site Glycyl thioester intermediate is cysteine 87. The interval 152–183 (EALKEQEEGTGDSSSESSMSDFSEDEAQDMEL) is disordered. Positions 163 to 172 (DSSSESSMSD) are enriched in low complexity. The segment covering 173–183 (FSEDEAQDMEL) has biased composition (acidic residues).

The protein belongs to the ubiquitin-conjugating enzyme family. Interacts with MAEA and WDR26, components of the CTLH complex that contains GID4, RANBP9 and/or RANBP10, MKLN1, MAEA, RMND5A (or alternatively its paralog RMND5B), GID8, ARMC8, WDR26 and YPEL5. In terms of processing, autoubiquitinated in vitro in the presence of NEDD4L.

It carries out the reaction S-ubiquitinyl-[E1 ubiquitin-activating enzyme]-L-cysteine + [E2 ubiquitin-conjugating enzyme]-L-cysteine = [E1 ubiquitin-activating enzyme]-L-cysteine + S-ubiquitinyl-[E2 ubiquitin-conjugating enzyme]-L-cysteine.. It catalyses the reaction S-ubiquitinyl-[E1 ubiquitin-activating enzyme]-L-cysteine + [acceptor protein]-L-lysine = [E1 ubiquitin-activating enzyme]-L-cysteine + N(6)-monoubiquitinyl-[acceptor protein]-L-lysine.. The protein operates within protein modification; protein ubiquitination. In terms of biological role, accepts ubiquitin from the E1 complex and catalyzes its covalent attachment to other proteins. E2 ubiquitin conjugating enzyme that transfers ubiquitin to MAEA, a core component of the CTLH E3 ubiquitin-protein ligase complex. In vitro catalyzes 'Lys-11'- and 'Lys-48'-linked polyubiquitination. Capable, in vitro, to ubiquitinate histone H2A. The polypeptide is Ubiquitin-conjugating enzyme E2 H (UBE2H) (Homo sapiens (Human)).